The following is a 325-amino-acid chain: 4-diphosphocytidyl-2-C-methyl-D-erythritol kinase (325 aa).

Residue K22 is part of the active site. Position 110-120 (110-120 (PVAGGMAGGSA)) interacts with ATP. D152 is a catalytic residue. A disordered region spans residues 306–325 (PAPGARVLEAVSTPSPGGRS).

Belongs to the GHMP kinase family. IspE subfamily.

It carries out the reaction 4-CDP-2-C-methyl-D-erythritol + ATP = 4-CDP-2-C-methyl-D-erythritol 2-phosphate + ADP + H(+). It functions in the pathway isoprenoid biosynthesis; isopentenyl diphosphate biosynthesis via DXP pathway; isopentenyl diphosphate from 1-deoxy-D-xylulose 5-phosphate: step 3/6. In terms of biological role, catalyzes the phosphorylation of the position 2 hydroxy group of 4-diphosphocytidyl-2C-methyl-D-erythritol. This Kineococcus radiotolerans (strain ATCC BAA-149 / DSM 14245 / SRS30216) protein is 4-diphosphocytidyl-2-C-methyl-D-erythritol kinase.